We begin with the raw amino-acid sequence, 281 residues long: Diaminopimelate epimerase (281 aa).

Substrate is bound by residues asparagine 13, glutamine 46, and asparagine 66. Residue cysteine 75 is the Proton donor of the active site. Substrate is bound by residues glycine 76–asparagine 77, asparagine 160, asparagine 193, and glutamate 211–arginine 212. Cysteine 220 (proton acceptor) is an active-site residue. Glycine 221–threonine 222 contacts substrate.

It belongs to the diaminopimelate epimerase family. Homodimer.

The protein resides in the cytoplasm. It carries out the reaction (2S,6S)-2,6-diaminopimelate = meso-2,6-diaminopimelate. It participates in amino-acid biosynthesis; L-lysine biosynthesis via DAP pathway; DL-2,6-diaminopimelate from LL-2,6-diaminopimelate: step 1/1. Catalyzes the stereoinversion of LL-2,6-diaminopimelate (L,L-DAP) to meso-diaminopimelate (meso-DAP), a precursor of L-lysine and an essential component of the bacterial peptidoglycan. This Acinetobacter baylyi (strain ATCC 33305 / BD413 / ADP1) protein is Diaminopimelate epimerase.